Here is an 868-residue protein sequence, read N- to C-terminus: Translation initiation factor IF-2 (868 aa).

Residues 103 to 183 (RSELPETSDR…RQAAAERETV (81 aa)) are compositionally biased toward basic and acidic residues. The disordered stretch occupies residues 103–274 (RSELPETSDR…GRPMLMPEQK (172 aa)). Positions 190–207 (VAAPPIPRPAPEPRPPAR) are enriched in pro residues. Residues 213–254 (PKAEAPRAHPAERETEARGDKRSAGLSRKDEYRELQGDDFRK) show a composition bias toward basic and acidic residues. Basic residues predominate over residues 255 to 264 (GGGKRKKPKT). Positions 369–538 (PRPPVVTIMG…LVQAEVLELK (170 aa)) constitute a tr-type G domain. The tract at residues 378–385 (GHVDHGKT) is G1. Position 378–385 (378–385 (GHVDHGKT)) interacts with GTP. Residues 403-407 (GITQH) are G2. The tract at residues 424 to 427 (DTPG) is G3. Residues 424 to 428 (DTPGH) and 478 to 481 (NKMD) contribute to the GTP site. The G4 stretch occupies residues 478-481 (NKMD). Positions 514-516 (SAK) are G5.

This sequence belongs to the TRAFAC class translation factor GTPase superfamily. Classic translation factor GTPase family. IF-2 subfamily.

The protein localises to the cytoplasm. One of the essential components for the initiation of protein synthesis. Protects formylmethionyl-tRNA from spontaneous hydrolysis and promotes its binding to the 30S ribosomal subunits. Also involved in the hydrolysis of GTP during the formation of the 70S ribosomal complex. The sequence is that of Translation initiation factor IF-2 from Methylococcus capsulatus (strain ATCC 33009 / NCIMB 11132 / Bath).